We begin with the raw amino-acid sequence, 118 residues long: MGSKAKKRVLLPTRPAPPTVEQILEDVRGAPAEDPVFTILAPEDPPVPFRMMEDAEAPGEQLYQQSRAYVAANQRLQQAGNVLRQRCELLQRAGEDLEREVAQMKQAALPAAEAASSG.

Phosphotyrosine is present on tyrosine 63. A coiled-coil region spans residues 81–109 (NVLRQRCELLQRAGEDLEREVAQMKQAAL).

Belongs to the UPF0449 family.

This chain is UPF0449 protein C19orf25 (C19orf25), found in Homo sapiens (Human).